A 62-amino-acid polypeptide reads, in one-letter code: MAKKAKGNRVQVILECTEHKDSGMPGTSRYITTKNRKNTTERLELKKYNPILKRVTVHKEIK.

The protein belongs to the bacterial ribosomal protein bL33 family.

The sequence is that of Large ribosomal subunit protein bL33 from Bacteroides fragilis (strain ATCC 25285 / DSM 2151 / CCUG 4856 / JCM 11019 / LMG 10263 / NCTC 9343 / Onslow / VPI 2553 / EN-2).